The primary structure comprises 397 residues: Ubiquitin-like modifier-activating enzyme 5 (397 aa).

Gly-76, Asp-97, Lys-120, Asn-143, and Asn-177 together coordinate ATP. 2 residues coordinate Zn(2+): Cys-219 and Cys-222. The active-site Glycyl thioester intermediate is Cys-243. 2 residues coordinate Zn(2+): Cys-296 and Cys-301. Residues 343–384 (PSDAPTDLSQSTDVGQGLRLAYEAPEKSSAEATQAATAPVDD) are disordered.

It belongs to the ubiquitin-activating E1 family. UBA5 subfamily.

In terms of biological role, E1-like enzyme which activates UFM1. The polypeptide is Ubiquitin-like modifier-activating enzyme 5 (Drosophila pseudoobscura pseudoobscura (Fruit fly)).